We begin with the raw amino-acid sequence, 167 residues long: Iron-sulfur cluster assembly protein 1 (167 aa).

A mitochondrion-targeting transit peptide spans 1-50 (MMLKQAAKKALGLTSRQSTPWSVGILRTYHENVIDHYDNPRNVGSFDKND).

The protein belongs to the NifU family. In terms of assembly, component of the core Fe-S cluster (ISC) assembly machinery. Interacts with HSCB. [2Fe-2S] cluster serves as cofactor. As to expression, expressed in roots, stems, leaves, flowers, pollen and siliques.

The protein resides in the mitochondrion matrix. Its subcellular location is the cytoplasm. It localises to the cytosol. Its pathway is cofactor biosynthesis; iron-sulfur cluster biosynthesis. In terms of biological role, scaffold protein for the de novo synthesis of iron-sulfur (Fe-S) clusters within mitochondria, which is required for maturation of both mitochondrial and cytoplasmic [2Fe-2S] and [4Fe-4S] proteins. First, a [2Fe-2S] cluster is transiently assembled on the scaffold protein ISCU (ISU1, ISU2 or ISU3). In a second step, the cluster is released from ISCU, transferred to a glutaredoxin, followed by the formation of mitochondrial [2Fe-2S] proteins, the synthesis of [4Fe-4S] clusters and their target-specific insertion into the recipient apoproteins. Cluster assembly on ISCU depends on the function of the cysteine desulfurase complex NFS1-ISD11, which serves as the sulfur donor for cluster synthesis, the iron-binding protein frataxin as the putative iron donor, and the electron transfer chain comprised of ferredoxin reductase and ferredoxin, which receive their electrons from NADH. This is Iron-sulfur cluster assembly protein 1 (ISU1) from Arabidopsis thaliana (Mouse-ear cress).